The sequence spans 176 residues: Small ribosomal subunit protein uS5 (176 aa).

The S5 DRBM domain occupies 18–81 (FEEKMLFVNR…SIARKNMISV (64 aa)).

The protein belongs to the universal ribosomal protein uS5 family. Part of the 30S ribosomal subunit. Contacts proteins S4 and S8.

With S4 and S12 plays an important role in translational accuracy. In terms of biological role, located at the back of the 30S subunit body where it stabilizes the conformation of the head with respect to the body. The protein is Small ribosomal subunit protein uS5 of Deinococcus deserti (strain DSM 17065 / CIP 109153 / LMG 22923 / VCD115).